The following is a 118-amino-acid chain: Aspartate 1-decarboxylase (118 aa).

Serine 25 functions as the Schiff-base intermediate with substrate; via pyruvic acid in the catalytic mechanism. Serine 25 is subject to Pyruvic acid (Ser). Residue threonine 57 coordinates substrate. The active-site Proton donor is tyrosine 58. 73–75 (GAA) is a binding site for substrate.

The protein belongs to the PanD family. In terms of assembly, heterooctamer of four alpha and four beta subunits. The cofactor is pyruvate. Is synthesized initially as an inactive proenzyme, which is activated by self-cleavage at a specific serine bond to produce a beta-subunit with a hydroxyl group at its C-terminus and an alpha-subunit with a pyruvoyl group at its N-terminus.

It is found in the cytoplasm. It catalyses the reaction L-aspartate + H(+) = beta-alanine + CO2. Its pathway is cofactor biosynthesis; (R)-pantothenate biosynthesis; beta-alanine from L-aspartate: step 1/1. Catalyzes the pyruvoyl-dependent decarboxylation of aspartate to produce beta-alanine. This chain is Aspartate 1-decarboxylase, found in Phenylobacterium zucineum (strain HLK1).